The chain runs to 335 residues: 4-hydroxythreonine-4-phosphate dehydrogenase (335 aa).

Substrate is bound by residues His135 and Thr136. A divalent metal cation is bound by residues His165, His210, and His265. Lys273, Asn282, and Arg291 together coordinate substrate.

Belongs to the PdxA family. As to quaternary structure, homodimer. Zn(2+) is required as a cofactor. The cofactor is Mg(2+). Requires Co(2+) as cofactor.

Its subcellular location is the cytoplasm. It carries out the reaction 4-(phosphooxy)-L-threonine + NAD(+) = 3-amino-2-oxopropyl phosphate + CO2 + NADH. Its pathway is cofactor biosynthesis; pyridoxine 5'-phosphate biosynthesis; pyridoxine 5'-phosphate from D-erythrose 4-phosphate: step 4/5. In terms of biological role, catalyzes the NAD(P)-dependent oxidation of 4-(phosphooxy)-L-threonine (HTP) into 2-amino-3-oxo-4-(phosphooxy)butyric acid which spontaneously decarboxylates to form 3-amino-2-oxopropyl phosphate (AHAP). The sequence is that of 4-hydroxythreonine-4-phosphate dehydrogenase from Saccharophagus degradans (strain 2-40 / ATCC 43961 / DSM 17024).